The sequence spans 243 residues: 2-C-methyl-D-erythritol 4-phosphate cytidylyltransferase (243 aa).

Belongs to the IspD/TarI cytidylyltransferase family. IspD subfamily.

The enzyme catalyses 2-C-methyl-D-erythritol 4-phosphate + CTP + H(+) = 4-CDP-2-C-methyl-D-erythritol + diphosphate. It functions in the pathway isoprenoid biosynthesis; isopentenyl diphosphate biosynthesis via DXP pathway; isopentenyl diphosphate from 1-deoxy-D-xylulose 5-phosphate: step 2/6. In terms of biological role, catalyzes the formation of 4-diphosphocytidyl-2-C-methyl-D-erythritol from CTP and 2-C-methyl-D-erythritol 4-phosphate (MEP). This Pelodictyon phaeoclathratiforme (strain DSM 5477 / BU-1) protein is 2-C-methyl-D-erythritol 4-phosphate cytidylyltransferase.